The sequence spans 142 residues: MAEEKKTRTLEQIQDEIRSYLGEIEYLRSQVGVIDATITDLRTVDATLAYLKEKGKGKEIYIPLGSGVAIRGKIENPDDVIMDVGAGILVGATVDEARENIEKRIKALMDLRLALLRKIEEDTRKVNELLKELQEMQPEKRE.

Belongs to the prefoldin subunit alpha family. Heterohexamer of two alpha and four beta subunits.

It localises to the cytoplasm. Molecular chaperone capable of stabilizing a range of proteins. Seems to fulfill an ATP-independent, HSP70-like function in archaeal de novo protein folding. The polypeptide is Prefoldin subunit alpha 2 (Thermococcus kodakarensis (strain ATCC BAA-918 / JCM 12380 / KOD1) (Pyrococcus kodakaraensis (strain KOD1))).